The chain runs to 188 residues: Peptidyl-tRNA hydrolase (188 aa).

Position 15 (Tyr-15) interacts with tRNA. The Proton acceptor role is filled by His-20. TRNA is bound by residues Phe-63, Asn-65, and Asn-111.

It belongs to the PTH family. As to quaternary structure, monomer.

The protein resides in the cytoplasm. It carries out the reaction an N-acyl-L-alpha-aminoacyl-tRNA + H2O = an N-acyl-L-amino acid + a tRNA + H(+). Its function is as follows. Hydrolyzes ribosome-free peptidyl-tRNAs (with 1 or more amino acids incorporated), which drop off the ribosome during protein synthesis, or as a result of ribosome stalling. Catalyzes the release of premature peptidyl moieties from peptidyl-tRNA molecules trapped in stalled 50S ribosomal subunits, and thus maintains levels of free tRNAs and 50S ribosomes. The sequence is that of Peptidyl-tRNA hydrolase from Hydrogenobaculum sp. (strain Y04AAS1).